We begin with the raw amino-acid sequence, 122 residues long: Large ribosomal subunit protein uL18 (122 aa).

Belongs to the universal ribosomal protein uL18 family. Part of the 50S ribosomal subunit; part of the 5S rRNA/L5/L18/L25 subcomplex. Contacts the 5S and 23S rRNAs.

Functionally, this is one of the proteins that bind and probably mediate the attachment of the 5S RNA into the large ribosomal subunit, where it forms part of the central protuberance. The sequence is that of Large ribosomal subunit protein uL18 from Desulforamulus reducens (strain ATCC BAA-1160 / DSM 100696 / MI-1) (Desulfotomaculum reducens).